A 301-amino-acid chain; its full sequence is MSHTAEIPLVPGSESPLELKPLKAADPQIVYHRRAHRLLSLAKDSPLADYFELCRRLVSIQAKLAEGADFGQLLAWGKDEATPLSLLGSEADSYWQGLLQQLLSDLLPQVDESIARVVRLLMQQSPEQLSSWGRSLRQGHVSEVPAHFSLFIWAAMGVYWSHWAPMVIKRMDQRKVAQQSMCPVCGCHPVASVIVDQPRAGLRYLHCSLCESEWHYIRAHCTSCGQDKEMTIWSLDDAQAQVRIESCDECHGYTKMMFVENSPSMDVAADDLATLMLDSELNAKGFGATTLNPLLMAHETT.

This sequence belongs to the FdhE family.

It localises to the cytoplasm. In terms of biological role, necessary for formate dehydrogenase activity. This chain is Protein FdhE homolog, found in Shewanella baltica (strain OS195).